The chain runs to 78 residues: Exodeoxyribonuclease 7 small subunit (78 aa).

The protein belongs to the XseB family. In terms of assembly, heterooligomer composed of large and small subunits.

Its subcellular location is the cytoplasm. The catalysed reaction is Exonucleolytic cleavage in either 5'- to 3'- or 3'- to 5'-direction to yield nucleoside 5'-phosphates.. Functionally, bidirectionally degrades single-stranded DNA into large acid-insoluble oligonucleotides, which are then degraded further into small acid-soluble oligonucleotides. The sequence is that of Exodeoxyribonuclease 7 small subunit from Psychromonas ingrahamii (strain DSM 17664 / CCUG 51855 / 37).